Consider the following 987-residue polypeptide: ATP-dependent 6-phosphofructokinase subunit alpha (987 aa).

The interval 1–602 (MPSSSDAINR…DYRYFRDISI (602 aa)) is N-terminal catalytic PFK domain 1. ATP is bound by residues Gly237, 300–301 (RC), and 330–333 (GDGS). Asp331 provides a ligand contact to Mg(2+). Residues 376–378 (SID), Arg413, 420–422 (MGR), Glu477, Arg504, and 510–513 (HVQR) contribute to the beta-D-fructose 6-phosphate site. Asp378 acts as the Proton acceptor in catalysis. An interdomain linker region spans residues 603 to 616 (YDDGSKQLSEDKRL). The interval 617 to 987 (NIAIVHVGAA…KSLLKKQERY (371 aa)) is C-terminal regulatory PFK domain 2. Residues Arg686, 743–747 (TVSNN), Arg781, 788–790 (QGG), Glu848, Arg874, 880–883 (HVQQ), and Arg958 each bind beta-D-fructose 2,6-bisphosphate.

This sequence belongs to the phosphofructokinase type A (PFKA) family. ATP-dependent PFK group I subfamily. Eukaryotic two domain clade 'E' sub-subfamily. In terms of assembly, heterooctamer of 4 alpha and 4 beta chains. It depends on Mg(2+) as a cofactor.

The protein localises to the cytoplasm. It catalyses the reaction beta-D-fructose 6-phosphate + ATP = beta-D-fructose 1,6-bisphosphate + ADP + H(+). The protein operates within carbohydrate degradation; glycolysis; D-glyceraldehyde 3-phosphate and glycerone phosphate from D-glucose: step 3/4. Allosterically activated by ADP, AMP, or fructose 2,6-bisphosphate, and allosterically inhibited by ATP or citrate. In terms of biological role, catalyzes the phosphorylation of D-fructose 6-phosphate to fructose 1,6-bisphosphate by ATP, the first committing step of glycolysis. This Candida albicans (Yeast) protein is ATP-dependent 6-phosphofructokinase subunit alpha (PFK1).